The chain runs to 540 residues: Chaperonin GroEL (540 aa).

Residues 29–32 (TLGP), 86–90 (DGTTT), glycine 413, 476–478 (NAA), and aspartate 492 each bind ATP.

Belongs to the chaperonin (HSP60) family. As to quaternary structure, forms a cylinder of 14 subunits composed of two heptameric rings stacked back-to-back. Interacts with the co-chaperonin GroES.

The protein localises to the cytoplasm. It catalyses the reaction ATP + H2O + a folded polypeptide = ADP + phosphate + an unfolded polypeptide.. In terms of biological role, together with its co-chaperonin GroES, plays an essential role in assisting protein folding. The GroEL-GroES system forms a nano-cage that allows encapsulation of the non-native substrate proteins and provides a physical environment optimized to promote and accelerate protein folding. In Streptococcus pneumoniae (strain Hungary19A-6), this protein is Chaperonin GroEL.